Reading from the N-terminus, the 152-residue chain is Transcriptional regulator MraZ (152 aa).

SpoVT-AbrB domains lie at 5–52 (ASAI…PFDE) and 81–124 (AHEC…DETA).

It belongs to the MraZ family. Forms oligomers.

It localises to the cytoplasm. The protein resides in the nucleoid. The sequence is that of Transcriptional regulator MraZ from Shewanella sediminis (strain HAW-EB3).